Here is a 676-residue protein sequence, read N- to C-terminus: tRNA 5-methylaminomethyl-2-thiouridine biosynthesis bifunctional protein MnmC (676 aa).

The tract at residues 1–241 (MFTVTPAKIY…KRECLCGIKN (241 aa)) is tRNA (mnm(5)s(2)U34)-methyltransferase. The FAD-dependent cmnm(5)s(2)U34 oxidoreductase stretch occupies residues 268–676 (IGGGIASLFT…RKLLKGTEIK (409 aa)).

It in the N-terminal section; belongs to the methyltransferase superfamily. tRNA (mnm(5)s(2)U34)-methyltransferase family. This sequence in the C-terminal section; belongs to the DAO family. FAD serves as cofactor.

It localises to the cytoplasm. It carries out the reaction 5-aminomethyl-2-thiouridine(34) in tRNA + S-adenosyl-L-methionine = 5-methylaminomethyl-2-thiouridine(34) in tRNA + S-adenosyl-L-homocysteine + H(+). Functionally, catalyzes the last two steps in the biosynthesis of 5-methylaminomethyl-2-thiouridine (mnm(5)s(2)U) at the wobble position (U34) in tRNA. Catalyzes the FAD-dependent demodification of cmnm(5)s(2)U34 to nm(5)s(2)U34, followed by the transfer of a methyl group from S-adenosyl-L-methionine to nm(5)s(2)U34, to form mnm(5)s(2)U34. The protein is tRNA 5-methylaminomethyl-2-thiouridine biosynthesis bifunctional protein MnmC of Histophilus somni (strain 2336) (Haemophilus somnus).